Here is a 263-residue protein sequence, read N- to C-terminus: Hydroxyethylthiazole kinase (263 aa).

Position 41 (M41) interacts with substrate. ATP is bound by residues K117 and S163. G190 is a binding site for substrate.

It belongs to the Thz kinase family. Mg(2+) serves as cofactor.

The catalysed reaction is 5-(2-hydroxyethyl)-4-methylthiazole + ATP = 4-methyl-5-(2-phosphooxyethyl)-thiazole + ADP + H(+). The protein operates within cofactor biosynthesis; thiamine diphosphate biosynthesis; 4-methyl-5-(2-phosphoethyl)-thiazole from 5-(2-hydroxyethyl)-4-methylthiazole: step 1/1. Catalyzes the phosphorylation of the hydroxyl group of 4-methyl-5-beta-hydroxyethylthiazole (THZ). This chain is Hydroxyethylthiazole kinase, found in Thermoanaerobacter sp. (strain X514).